Here is a 307-residue protein sequence, read N- to C-terminus: Ribosomal RNA small subunit methyltransferase H (307 aa).

S-adenosyl-L-methionine is bound by residues 32-34 (GGH), Asp-52, Phe-78, Asp-100, and Gln-107.

It belongs to the methyltransferase superfamily. RsmH family.

It localises to the cytoplasm. It carries out the reaction cytidine(1402) in 16S rRNA + S-adenosyl-L-methionine = N(4)-methylcytidine(1402) in 16S rRNA + S-adenosyl-L-homocysteine + H(+). Specifically methylates the N4 position of cytidine in position 1402 (C1402) of 16S rRNA. The polypeptide is Ribosomal RNA small subunit methyltransferase H (Coxiella burnetii (strain CbuK_Q154) (Coxiella burnetii (strain Q154))).